We begin with the raw amino-acid sequence, 397 residues long: N-acetyllactosaminide beta-1,3-N-acetylglucosaminyltransferase 2 (397 aa).

Residues 1-7 (MSVGRRR) lie on the Cytoplasmic side of the membrane. A helical; Signal-anchor for type II membrane protein membrane pass occupies residues 8–28 (IKLLGILMMANVFIYFIMEVS). Over 29-397 (KSSSQEKNGK…SQLQSAHLKC (369 aa)) the chain is Lumenal. Asn79, Asn89, Asn127, Asn173, and Asn219 each carry an N-linked (GlcNAc...) asparagine glycan.

It belongs to the glycosyltransferase 31 family. As to quaternary structure, interacts with B3GNT8; this interaction greatly increases B3GNT2 catalytic activity, independently of B3GNT8 enzymatic activity. The cofactor is Mn(2+). As to expression, ubiquitous.

Its subcellular location is the golgi apparatus membrane. The enzyme catalyses a beta-D-galactosyl-(1-&gt;4)-N-acetyl-beta-D-glucosaminyl derivative + UDP-N-acetyl-alpha-D-glucosamine = an N-acetyl-beta-D-glucosaminyl-(1-&gt;3)-beta-D-galactosyl-(1-&gt;4)-N-acetyl-beta-D-glucosaminyl derivative + UDP + H(+). The protein operates within protein modification; protein glycosylation. Beta-1,3-N-acetylglucosaminyltransferase involved in the synthesis of poly-N-acetyllactosamine. Catalyzes the initiation and elongation of poly-N-acetyllactosamine chains. Shows a marked preference for Gal(beta1-4)Glc(NAc)-based acceptors. Probably constitutes the main polylactosamine synthase. The protein is N-acetyllactosaminide beta-1,3-N-acetylglucosaminyltransferase 2 (B3GNT2) of Homo sapiens (Human).